Consider the following 315-residue polypeptide: Methionyl-tRNA formyltransferase (315 aa).

113-116 (SILP) is a (6S)-5,6,7,8-tetrahydrofolate binding site.

Belongs to the Fmt family.

The enzyme catalyses L-methionyl-tRNA(fMet) + (6R)-10-formyltetrahydrofolate = N-formyl-L-methionyl-tRNA(fMet) + (6S)-5,6,7,8-tetrahydrofolate + H(+). Attaches a formyl group to the free amino group of methionyl-tRNA(fMet). The formyl group appears to play a dual role in the initiator identity of N-formylmethionyl-tRNA by promoting its recognition by IF2 and preventing the misappropriation of this tRNA by the elongation apparatus. The polypeptide is Methionyl-tRNA formyltransferase (Vibrio cholerae serotype O1 (strain M66-2)).